A 434-amino-acid chain; its full sequence is Ribosomal protein uS12 methylthiotransferase RimO (434 aa).

The MTTase N-terminal domain occupies 2–112; it reads AKIGFVSLGC…VLEAVQVVLP (111 aa). Cys-11, Cys-47, Cys-76, Cys-142, Cys-146, and Cys-149 together coordinate [4Fe-4S] cluster. A Radical SAM core domain is found at 128–365; the sequence is LTPRHYAYVK…LELQARVSLR (238 aa). In terms of domain architecture, TRAM spans 368-434; the sequence is QRFVGKTLEV…DTYDLHGVQA (67 aa).

Belongs to the methylthiotransferase family. RimO subfamily. [4Fe-4S] cluster serves as cofactor.

It is found in the cytoplasm. The catalysed reaction is L-aspartate(89)-[ribosomal protein uS12]-hydrogen + (sulfur carrier)-SH + AH2 + 2 S-adenosyl-L-methionine = 3-methylsulfanyl-L-aspartate(89)-[ribosomal protein uS12]-hydrogen + (sulfur carrier)-H + 5'-deoxyadenosine + L-methionine + A + S-adenosyl-L-homocysteine + 2 H(+). In terms of biological role, catalyzes the methylthiolation of an aspartic acid residue of ribosomal protein uS12. This chain is Ribosomal protein uS12 methylthiotransferase RimO, found in Thermus thermophilus (strain ATCC 27634 / DSM 579 / HB8).